Reading from the N-terminus, the 1017-residue chain is Probable DNA ligase (1017 aa).

Positions 1-363 are unknown; the sequence is MPWDVKFSHG…PACATPLHAP (363 aa). The interval 326–352 is disordered; sequence GIRSSPPQVRAGDATPSSRSSGDAGVA. Positions 364 to 1017 are DNA ligase; it reads DSFARFVAAA…GARPPPAASD (654 aa). E667 contacts ATP. The active-site N6-AMP-lysine intermediate is K669. The ATP site is built by R674, R689, E717, R860, and K866.

The protein in the C-terminal section; belongs to the ATP-dependent DNA ligase family. Requires Mg(2+) as cofactor.

It carries out the reaction ATP + (deoxyribonucleotide)n-3'-hydroxyl + 5'-phospho-(deoxyribonucleotide)m = (deoxyribonucleotide)n+m + AMP + diphosphate.. In terms of biological role, DNA ligase that seals nicks in double-stranded DNA during DNA replication, DNA recombination and DNA repair. The protein is Probable DNA ligase (lig) of Opitutus terrae (strain DSM 11246 / JCM 15787 / PB90-1).